Here is a 486-residue protein sequence, read N- to C-terminus: Galactose-3-O-sulfotransferase 4 (486 aa).

Over 1–18 (MGPLSPARTLRLWGPRSL) the chain is Cytoplasmic. The helical; Signal-anchor for type II membrane protein transmembrane segment at 19 to 39 (GVALGVFMTIGFALQLLGGPF) threads the bilayer. Residues 40-486 (QRRLPGLQLR…PLKTSRPLSP (447 aa)) are Lumenal-facing. N-linked (GlcNAc...) asparagine glycosylation is present at Asn-374.

Belongs to the galactose-3-O-sulfotransferase family. Mn(2+) serves as cofactor. In terms of tissue distribution, expressed mainly in placenta, thymus, testis, ovary, spinal cord, trachea and adrenal gland and at low levels in brain, lung, spleen, prostate, small intestine, colon, stomach thyroid and lymph node.

It is found in the golgi apparatus. Its subcellular location is the golgi stack membrane. It functions in the pathway protein modification; carbohydrate sulfation. Catalyzes the transfer of sulfate to beta-1,3-linked galactose residues in O-linked glycoproteins. Good substrates include asialofetuin, Gal-beta-1,3-GalNAc and Gal-beta-1,3 (GlcNAc-beta-1,6)GalNAc. The polypeptide is Galactose-3-O-sulfotransferase 4 (GAL3ST4) (Homo sapiens (Human)).